A 489-amino-acid polypeptide reads, in one-letter code: Cobyric acid synthase (489 aa).

Residues 251-444 (GLIIAVIRLP…LHGIFANDTF (194 aa)) enclose the GATase cobBQ-type domain. Catalysis depends on cysteine 329, which acts as the Nucleophile. Histidine 436 is a catalytic residue.

This sequence belongs to the CobB/CobQ family. CobQ subfamily.

The protein operates within cofactor biosynthesis; adenosylcobalamin biosynthesis. In terms of biological role, catalyzes amidations at positions B, D, E, and G on adenosylcobyrinic A,C-diamide. NH(2) groups are provided by glutamine, and one molecule of ATP is hydrogenolyzed for each amidation. This is Cobyric acid synthase from Chloroflexus aurantiacus (strain ATCC 29366 / DSM 635 / J-10-fl).